The chain runs to 278 residues: tRNA (guanine-N(7)-)-methyltransferase (278 aa).

A disordered region spans residues 1 to 42 (MRHDGPMHVQPGVGLQSDTSSSTGTGSGPADEPEAEKSAWGY). Residues Glu106, Glu131, Asn160, and Asp183 each contribute to the S-adenosyl-L-methionine site. Residue Asp183 is part of the active site. Substrate is bound by residues Lys187, Asp219, and 256-259 (TKYE).

The protein belongs to the class I-like SAM-binding methyltransferase superfamily. TrmB family.

The catalysed reaction is guanosine(46) in tRNA + S-adenosyl-L-methionine = N(7)-methylguanosine(46) in tRNA + S-adenosyl-L-homocysteine. The protein operates within tRNA modification; N(7)-methylguanine-tRNA biosynthesis. Functionally, catalyzes the formation of N(7)-methylguanine at position 46 (m7G46) in tRNA. The polypeptide is tRNA (guanine-N(7)-)-methyltransferase (Mycobacterium ulcerans (strain Agy99)).